The following is a 1225-amino-acid chain: MVDVNRFKSMQITLASPSKVRSWSYGEVKKPETINYRTLKPEREGLFDEVIFGPTKDWECACGKYKRIRYRGIVCDRCGVEVTRTKVRRERMGHIELKAPVSHIWYFKGIPSRMGLTLDMSPRALEEVIYFAAYVVIDPKDTPLEHKSIMTEREYRERLREYGYGSFVAKMGAEAIQDLLKQVDLEKEIAELKEELKTATGQKRVKAIRRLDVLDAFYKSGNKPEWMILNILPVIPPDLRPMLQLDGGRFASSDLNDLYRRVINRNNRLARLLELNAPGIIVQNEKRMLQEAVDALIDNGRRGRPITGPGSRPLKSLSHMLKGKQGRFRQNLLGKRVDFSGRSVIAVGPTLKMYQCGVPREMAIELFKPFVMREIVARDIVQNVKAAKRLVERGDERIWDILEEVIKEHPVLLNRAPTLHRLGIQAFEPVLIDGKALRLHPLVCEAYNADFDGDQMAIHVPLSEEAQAEARILMLAAEHILNPKDGKPVVTPSQDMVLGNYYLTMEEAGREGEGMVFKDRDEAVMAYRNGYVHLHSRVGIATDSLNKPWTEEQRHKVLLTTVGKILFNDIMPEGLPYLQEPNNANLTEGVPAKYFLPLGGDIKEAISNLELNPPFKKKNLGNIIAEIFKRFRTTETSALLDRMKNLGYHHSTLAGLTVGIADIPVVDDKTEIIEESHKRVEQITKQFRRGMITDDERYNAVTAEWRAAREKLEKRLIANQDPKNPIVMMMDSGARGNISNFSQLAGMRGLMAAPNGRIMELPILSNFREGLSVLEMFFSTHGARKGMTDTALKTADSGYLTRRLVDVAQDVIIREDDCGTDRGLLIRSIAEGKEMIESLEERLNGRYTKKTVKHPETGAVIIGPNELITEDKAREIVNAGVEEVTIRSVFTCNTRHGVCRHCYGINLATGDAVEVGEAVGTIAAQSIGEPGTQLTMRTFHTGGVASNTDITQGLPRVQEIFEARNPKGEAVITEVKGQVTAIEEDASTRTKKVFVKGETGEGEYVVPFTARMRVEVGGQVARGAALTEGSIQPKRLLAVRDVLSVETYLLGEVQKVYRSQGVEIGDKHIEVMVRQMIRKVRVMDPGDTDLLMGTLMDINDFTDANKDVLIAGGVPATGRPVLMGITKASLETNSFLSAASFQETTRVLTDAAIRGKKDHLLGLKENVIIGKIIPAGTGMARYRNLEPYAVNEEEYLNPPVEEEGNEETTEVVVDTAVETVEETVE.

Zn(2+)-binding residues include cysteine 60, cysteine 62, cysteine 75, and cysteine 78. Mg(2+) is bound by residues aspartate 450, aspartate 452, and aspartate 454. Positions 818, 892, 899, and 902 each coordinate Zn(2+).

The protein belongs to the RNA polymerase beta' chain family. As to quaternary structure, the RNAP catalytic core consists of 2 alpha, 1 beta, 1 beta' and 1 omega subunit. When a sigma factor is associated with the core the holoenzyme is formed, which can initiate transcription. The cofactor is Mg(2+). It depends on Zn(2+) as a cofactor.

The enzyme catalyses RNA(n) + a ribonucleoside 5'-triphosphate = RNA(n+1) + diphosphate. Functionally, DNA-dependent RNA polymerase catalyzes the transcription of DNA into RNA using the four ribonucleoside triphosphates as substrates. This Streptococcus pneumoniae (strain P1031) protein is DNA-directed RNA polymerase subunit beta'.